The primary structure comprises 554 residues: Urocanate hydratase (554 aa).

NAD(+) contacts are provided by residues 51–52 (GG), Gln129, 175–177 (GMG), Glu195, 241–242 (NA), 262–266 (QTSAH), 272–273 (YL), and Tyr321. Cys409 is a catalytic residue. Gly491 is an NAD(+) binding site.

It belongs to the urocanase family. The cofactor is NAD(+).

The protein resides in the cytoplasm. It carries out the reaction 4-imidazolone-5-propanoate = trans-urocanate + H2O. It participates in amino-acid degradation; L-histidine degradation into L-glutamate; N-formimidoyl-L-glutamate from L-histidine: step 2/3. In terms of biological role, catalyzes the conversion of urocanate to 4-imidazolone-5-propionate. The chain is Urocanate hydratase from Caulobacter vibrioides (strain ATCC 19089 / CIP 103742 / CB 15) (Caulobacter crescentus).